We begin with the raw amino-acid sequence, 121 residues long: U15-barytoxin-Tl1b (121 aa).

The first 16 residues, 1–16 (MKLFMVLVASFAFAVA), serve as a signal peptide directing secretion. 4 disulfides stabilise this stretch: cysteine 54/cysteine 72, cysteine 65/cysteine 78, cysteine 69/cysteine 119, and cysteine 71/cysteine 90.

The protein belongs to the neurotoxin 03 (Tx2) family. 03 subfamily. As to expression, expressed by the venom gland.

Its subcellular location is the secreted. Functionally, ion channel inhibitor. This Trittame loki (Brush-footed trapdoor spider) protein is U15-barytoxin-Tl1b.